Reading from the N-terminus, the 105-residue chain is UPF0235 protein Mchl_2407 (105 aa).

It belongs to the UPF0235 family.

In Methylorubrum extorquens (strain CM4 / NCIMB 13688) (Methylobacterium extorquens), this protein is UPF0235 protein Mchl_2407.